We begin with the raw amino-acid sequence, 261 residues long: Cytochrome c oxidase subunit 3 (261 aa).

The Mitochondrial matrix portion of the chain corresponds to Met1–Pro15. A helical membrane pass occupies residues Trp16–Trp34. Over Phe35–Thr40 the chain is Mitochondrial intermembrane. A helical transmembrane segment spans residues Thr41–Thr66. Over Phe67–Thr72 the chain is Mitochondrial matrix. A helical membrane pass occupies residues Pro73 to Ser105. Residues Leu106–Glu128 are Mitochondrial intermembrane-facing. A helical membrane pass occupies residues Val129–Met152. Over Glu153–Asn155 the chain is Mitochondrial matrix. The chain crosses the membrane as a helical span at residues Arg156 to Glu183. The Mitochondrial intermembrane segment spans residues Ala184–Asp190. Residues Gly191–Leu223 traverse the membrane as a helical segment. Residues Lys224–His232 are Mitochondrial matrix-facing. Residues Phe233–Ile256 traverse the membrane as a helical segment. The Mitochondrial intermembrane segment spans residues Tyr257–Ser261.

This sequence belongs to the cytochrome c oxidase subunit 3 family. Component of the cytochrome c oxidase (complex IV, CIV), a multisubunit enzyme composed of 14 subunits. The complex is composed of a catalytic core of 3 subunits MT-CO1, MT-CO2 and MT-CO3, encoded in the mitochondrial DNA, and 11 supernumerary subunits COX4I, COX5A, COX5B, COX6A, COX6B, COX6C, COX7A, COX7B, COX7C, COX8 and NDUFA4, which are encoded in the nuclear genome. The complex exists as a monomer or a dimer and forms supercomplexes (SCs) in the inner mitochondrial membrane with NADH-ubiquinone oxidoreductase (complex I, CI) and ubiquinol-cytochrome c oxidoreductase (cytochrome b-c1 complex, complex III, CIII), resulting in different assemblies (supercomplex SCI(1)III(2)IV(1) and megacomplex MCI(2)III(2)IV(2)).

It localises to the mitochondrion inner membrane. It catalyses the reaction 4 Fe(II)-[cytochrome c] + O2 + 8 H(+)(in) = 4 Fe(III)-[cytochrome c] + 2 H2O + 4 H(+)(out). Functionally, component of the cytochrome c oxidase, the last enzyme in the mitochondrial electron transport chain which drives oxidative phosphorylation. The respiratory chain contains 3 multisubunit complexes succinate dehydrogenase (complex II, CII), ubiquinol-cytochrome c oxidoreductase (cytochrome b-c1 complex, complex III, CIII) and cytochrome c oxidase (complex IV, CIV), that cooperate to transfer electrons derived from NADH and succinate to molecular oxygen, creating an electrochemical gradient over the inner membrane that drives transmembrane transport and the ATP synthase. Cytochrome c oxidase is the component of the respiratory chain that catalyzes the reduction of oxygen to water. Electrons originating from reduced cytochrome c in the intermembrane space (IMS) are transferred via the dinuclear copper A center (CU(A)) of subunit 2 and heme A of subunit 1 to the active site in subunit 1, a binuclear center (BNC) formed by heme A3 and copper B (CU(B)). The BNC reduces molecular oxygen to 2 water molecules using 4 electrons from cytochrome c in the IMS and 4 protons from the mitochondrial matrix. The sequence is that of Cytochrome c oxidase subunit 3 (MT-CO3) from Gazella bennettii (Chinkara).